The following is a 30-amino-acid chain: Cyclotide hyen-F (30 aa).

The cyclopeptide (Gly-Asn) cross-link spans Gly-1 to Asn-30. Cystine bridges form between Cys-4–Cys-20, Cys-8–Cys-22, and Cys-13–Cys-27.

Post-translationally, this is a cyclic peptide. As to expression, detected in seeds (at protein level).

Probably participates in a plant defense mechanism. The protein is Cyclotide hyen-F of Pigea enneasperma (Spade flower).